A 206-amino-acid polypeptide reads, in one-letter code: dTTP/UTP pyrophosphatase (206 aa).

Asp79 serves as the catalytic Proton acceptor.

This sequence belongs to the Maf family. YhdE subfamily. The cofactor is a divalent metal cation.

It localises to the cytoplasm. It catalyses the reaction dTTP + H2O = dTMP + diphosphate + H(+). The enzyme catalyses UTP + H2O = UMP + diphosphate + H(+). In terms of biological role, nucleoside triphosphate pyrophosphatase that hydrolyzes dTTP and UTP. May have a dual role in cell division arrest and in preventing the incorporation of modified nucleotides into cellular nucleic acids. The sequence is that of dTTP/UTP pyrophosphatase from Rhizobium johnstonii (strain DSM 114642 / LMG 32736 / 3841) (Rhizobium leguminosarum bv. viciae).